The following is a 494-amino-acid chain: Ketol-acid reductoisomerase (NADP(+)) (494 aa).

The region spanning 14–208 is the KARI N-terminal Rossmann domain; it reads LDQLGRCRFM…GGHRAGVLES (195 aa). NADP(+)-binding positions include 45–48, R68, R76, S78, and 108–110; these read CGAQ and DKQ. The active site involves H132. G158 lines the NADP(+) pocket. KARI C-terminal knotted domains are found at residues 209–344 and 345–487; these read SFVA…NYPV and TDVE…MTDM. Mg(2+) contacts are provided by D217, E221, E389, and E393. Position 414 (S414) interacts with substrate.

This sequence belongs to the ketol-acid reductoisomerase family. Mg(2+) serves as cofactor.

The enzyme catalyses (2R)-2,3-dihydroxy-3-methylbutanoate + NADP(+) = (2S)-2-acetolactate + NADPH + H(+). The catalysed reaction is (2R,3R)-2,3-dihydroxy-3-methylpentanoate + NADP(+) = (S)-2-ethyl-2-hydroxy-3-oxobutanoate + NADPH + H(+). The protein operates within amino-acid biosynthesis; L-isoleucine biosynthesis; L-isoleucine from 2-oxobutanoate: step 2/4. It functions in the pathway amino-acid biosynthesis; L-valine biosynthesis; L-valine from pyruvate: step 2/4. Involved in the biosynthesis of branched-chain amino acids (BCAA). Catalyzes an alkyl-migration followed by a ketol-acid reduction of (S)-2-acetolactate (S2AL) to yield (R)-2,3-dihydroxy-isovalerate. In the isomerase reaction, S2AL is rearranged via a Mg-dependent methyl migration to produce 3-hydroxy-3-methyl-2-ketobutyrate (HMKB). In the reductase reaction, this 2-ketoacid undergoes a metal-dependent reduction by NADPH to yield (R)-2,3-dihydroxy-isovalerate. The protein is Ketol-acid reductoisomerase (NADP(+)) of Photobacterium profundum (strain SS9).